A 20-amino-acid chain; its full sequence is Antifungal protein (20 aa).

The protein belongs to the protease inhibitor I3 (leguminous Kunitz-type inhibitor) family.

In terms of biological role, inhibits soybean trypsin. Has antifungal activity against R.cerealis, A.brassicae and A.niger, and weak antifungal activity against F.oxysporum. This chain is Antifungal protein, found in Cullen corylifolium (Malaysian scurfpea).